The sequence spans 644 residues: DNA mismatch repair protein MutL (644 aa).

The span at 340–360 shows a compositional bias: basic and acidic residues; it reads KKEKDESVQEQFKFEHTKPRE. Residues 340–425 are disordered; the sequence is KKEKDESVQE…ETVREEKEWT (86 aa). Low complexity predominate over residues 387-400; sequence QLWQPPKQEWQPPQ. The segment covering 416–425 has biased composition (basic and acidic residues); the sequence is ETVREEKEWT.

It belongs to the DNA mismatch repair MutL/HexB family.

Its function is as follows. This protein is involved in the repair of mismatches in DNA. It is required for dam-dependent methyl-directed DNA mismatch repair. May act as a 'molecular matchmaker', a protein that promotes the formation of a stable complex between two or more DNA-binding proteins in an ATP-dependent manner without itself being part of a final effector complex. The polypeptide is DNA mismatch repair protein MutL (Bacillus mycoides (strain KBAB4) (Bacillus weihenstephanensis)).